The following is a 222-amino-acid chain: 3,4-dihydroxy-2-butanone 4-phosphate synthase (222 aa).

Residues 37–38 (RE), Asp42, 150–154 (RPGHT), and Glu174 each bind D-ribulose 5-phosphate. Glu38 is a Mg(2+) binding site. Position 153 (His153) interacts with Mg(2+).

Belongs to the DHBP synthase family. In terms of assembly, homodimer. Requires Mg(2+) as cofactor. Mn(2+) serves as cofactor.

The enzyme catalyses D-ribulose 5-phosphate = (2S)-2-hydroxy-3-oxobutyl phosphate + formate + H(+). Its pathway is cofactor biosynthesis; riboflavin biosynthesis; 2-hydroxy-3-oxobutyl phosphate from D-ribulose 5-phosphate: step 1/1. Catalyzes the conversion of D-ribulose 5-phosphate to formate and 3,4-dihydroxy-2-butanone 4-phosphate. This Chlorobium limicola (strain DSM 245 / NBRC 103803 / 6330) protein is 3,4-dihydroxy-2-butanone 4-phosphate synthase.